A 445-amino-acid chain; its full sequence is C-terminal-binding protein 2 (445 aa).

An Asymmetric dimethylarginine modification is found at R22. NAD(+) is bound by residues S106, 186 to 191 (IGFGRT), D210, 243 to 249 (CNLNEHN), 270 to 272 (AAR), and D296. R272 is an active-site residue. Residue E301 is part of the active site. H321 functions as the Proton donor in the catalytic mechanism. 321–324 (HTAW) contacts NAD(+). Residues 414-445 (THNLPTVAHPSQAPSPNQPTKHGDNREHPNEQ) are disordered. Residue S428 is modified to Phosphoserine; by HIPK2. Positions 434–445 (KHGDNREHPNEQ) are enriched in basic and acidic residues.

This sequence belongs to the D-isomer specific 2-hydroxyacid dehydrogenase family. As to quaternary structure, interacts with HIPK2, ZNF217 and PNN. Interacts with the transcription factors BKLF, delta EF1/AREB6/ZEB, EVI-1 and Friend of GATA (FOG) via the consensus motif P-X-[DNS]-L-[STVA]. Can form a complex with BKLF on a CACCC-box oligonucleotide. Can form homodimers or heterodimers of CTBP1 and CTBP2. Interacts with NRIP1 and WIZ. Interacts with PRDM16; represses white adipose tissue (WAT)-specific genes expression. Interacts with MCRIP1. Post-translationally, phosphorylation by HIPK2 on Ser-428 induces proteasomal degradation. Isoform 2 is specifically localized in synaptic ribbon (at protein level).

The protein resides in the nucleus. It localises to the synapse. In terms of biological role, corepressor targeting diverse transcription regulators. Functions in brown adipose tissue (BAT) differentiation. Isoform 2 probably acts as a scaffold for specialized synapses. This is C-terminal-binding protein 2 (Ctbp2) from Rattus norvegicus (Rat).